Reading from the N-terminus, the 251-residue chain is Tritrans,polycis-undecaprenyl-diphosphate synthase (geranylgeranyl-diphosphate specific) (251 aa).

The active site involves Asp-29. Asp-29 contributes to the Mg(2+) binding site. Substrate-binding positions include 30 to 33 (GNRR), Phe-34, His-46, and 74 to 76 (STE). Residue Asn-77 is the Proton acceptor of the active site. Residues Phe-78, Arg-80, Arg-200, and 206–208 (RLS) contribute to the substrate site.

The protein belongs to the UPP synthase family. As to quaternary structure, homodimer. Mg(2+) is required as a cofactor.

The catalysed reaction is geranylgeranyl diphosphate + 7 isopentenyl diphosphate = tri-trans,hepta-cis-undecaprenyl diphosphate + 7 diphosphate. In terms of biological role, catalyzes the sequential condensation of isopentenyl diphosphate (IPP) with geranylgeranyl diphosphate (GGPP) to yield (2Z,6Z,10Z,14Z,18Z,22Z,26Z,30E,34E,38E)-undecaprenyl diphosphate (tritrans,heptacis-UPP). It is probably the precursor of glycosyl carrier lipids. The chain is Tritrans,polycis-undecaprenyl-diphosphate synthase (geranylgeranyl-diphosphate specific) from Archaeoglobus fulgidus (strain ATCC 49558 / DSM 4304 / JCM 9628 / NBRC 100126 / VC-16).